The sequence spans 143 residues: Cytochrome c-type biogenesis protein CcmE (143 aa).

Topologically, residues 1 to 8 (MTPVRRRK) are cytoplasmic. A helical; Signal-anchor for type II membrane protein transmembrane segment spans residues 9–29 (LFILLFALSVLSAAAALVLYA). The Periplasmic portion of the chain corresponds to 30–143 (LRQNISLFYT…KSALADKVKQ (114 aa)). Heme contacts are provided by histidine 124 and tyrosine 128.

The protein belongs to the CcmE/CycJ family.

It is found in the cell inner membrane. Its function is as follows. Heme chaperone required for the biogenesis of c-type cytochromes. Transiently binds heme delivered by CcmC and transfers the heme to apo-cytochromes in a process facilitated by CcmF and CcmH. The polypeptide is Cytochrome c-type biogenesis protein CcmE (Legionella pneumophila).